Here is a 271-residue protein sequence, read N- to C-terminus: Elongation factor Ts (271 aa).

Residues 76 to 79 (TDFV) are involved in Mg(2+) ion dislocation from EF-Tu.

It belongs to the EF-Ts family.

Its subcellular location is the cytoplasm. In terms of biological role, associates with the EF-Tu.GDP complex and induces the exchange of GDP to GTP. It remains bound to the aminoacyl-tRNA.EF-Tu.GTP complex up to the GTP hydrolysis stage on the ribosome. The protein is Elongation factor Ts of Mycobacterium ulcerans (strain Agy99).